The sequence spans 546 residues: Putative serine/threonine-protein kinase L268 (546 aa).

The Cyclin N-terminal domain occupies 1-112 (MVCFSKYSGI…ILQTLDFHLV (112 aa)). Residues 260–544 (ITVVKNLGEG…QTLEEFNKFN (285 aa)) form the Protein kinase domain. ATP-binding positions include 266–274 (LGEGTYGTV) and Lys-287. Catalysis depends on Asp-389, which acts as the Proton acceptor.

It belongs to the protein kinase superfamily. Ser/Thr protein kinase family.

The catalysed reaction is L-seryl-[protein] + ATP = O-phospho-L-seryl-[protein] + ADP + H(+). The enzyme catalyses L-threonyl-[protein] + ATP = O-phospho-L-threonyl-[protein] + ADP + H(+). This Acanthamoeba polyphaga mimivirus (APMV) protein is Putative serine/threonine-protein kinase L268.